A 283-amino-acid chain; its full sequence is Pantothenate synthetase (283 aa).

30-37 (MGNLHAGH) provides a ligand contact to ATP. His-37 (proton donor) is an active-site residue. Gln-61 is a (R)-pantoate binding site. Residue Gln-61 participates in beta-alanine binding. Residue 149 to 152 (GEKD) participates in ATP binding. A (R)-pantoate-binding site is contributed by Gln-155. ATP is bound by residues Val-178 and 186 to 189 (LSSR).

It belongs to the pantothenate synthetase family. As to quaternary structure, homodimer.

Its subcellular location is the cytoplasm. The enzyme catalyses (R)-pantoate + beta-alanine + ATP = (R)-pantothenate + AMP + diphosphate + H(+). The protein operates within cofactor biosynthesis; (R)-pantothenate biosynthesis; (R)-pantothenate from (R)-pantoate and beta-alanine: step 1/1. Its function is as follows. Catalyzes the condensation of pantoate with beta-alanine in an ATP-dependent reaction via a pantoyl-adenylate intermediate. This is Pantothenate synthetase from Pseudomonas paraeruginosa (strain DSM 24068 / PA7) (Pseudomonas aeruginosa (strain PA7)).